The following is a 493-amino-acid chain: Probable cytosol aminopeptidase (493 aa).

Residues Lys260 and Asp265 each contribute to the Mn(2+) site. Lys272 is a catalytic residue. The Mn(2+) site is built by Asp283, Asp342, and Glu344. Arg346 is a catalytic residue.

Belongs to the peptidase M17 family. Requires Mn(2+) as cofactor.

Its subcellular location is the cytoplasm. It catalyses the reaction Release of an N-terminal amino acid, Xaa-|-Yaa-, in which Xaa is preferably Leu, but may be other amino acids including Pro although not Arg or Lys, and Yaa may be Pro. Amino acid amides and methyl esters are also readily hydrolyzed, but rates on arylamides are exceedingly low.. It carries out the reaction Release of an N-terminal amino acid, preferentially leucine, but not glutamic or aspartic acids.. In terms of biological role, presumably involved in the processing and regular turnover of intracellular proteins. Catalyzes the removal of unsubstituted N-terminal amino acids from various peptides. In Clostridium perfringens (strain 13 / Type A), this protein is Probable cytosol aminopeptidase.